The following is a 254-amino-acid chain: MFKHIIARTPARSLVDGLTSSHLGKPDYAKALEQHNAYIRALQTCDVDITLLPPDERFPDSVFVEDPVLCTSRCAIITRPGAESRRGETEIIEETVQRFYPGKVERIEAPGTVEAGDIMMVGDHFYIGESARTNAEGARQMIAILEKHGLSGSVVRLEKVLHLKTGLAYLEHNNLLAAGEFVSKPEFQDFNIIEIPEEESYAANCIWVNERVIMPAGYPRTREKIARLGYRVIEVDTSEYRKIDGGVSCMSLRF.

Substrate-binding positions include L18, D60, 65 to 66 (ED), R85, and R132. The active-site Proton donor is the H162. H162 contributes to the Zn(2+) binding site. I243 contacts substrate. C249 contributes to the Zn(2+) binding site. Catalysis depends on C249, which acts as the Nucleophile.

This sequence belongs to the DDAH family. In terms of assembly, homodimer.

It carries out the reaction N(omega),N(omega)-dimethyl-L-arginine + H2O = dimethylamine + L-citrulline. It catalyses the reaction N(omega)-methyl-L-arginine + H2O = L-citrulline + methylamine. With respect to regulation, inhibited by zinc ions. Competitively inhibited by lysine. Its function is as follows. Hydrolyzes N(G),N(G)-dimethyl-L-arginine (ADMA) and N(G)-monomethyl-L-arginine (MMA). In Pseudomonas aeruginosa (strain ATCC 15692 / DSM 22644 / CIP 104116 / JCM 14847 / LMG 12228 / 1C / PRS 101 / PAO1), this protein is N(G),N(G)-dimethylarginine dimethylaminohydrolase.